Here is a 289-residue protein sequence, read N- to C-terminus: dTDP-rhamnosyl transferase RfbG (289 aa).

Belongs to the glycosyltransferase 2 family.

It functions in the pathway bacterial outer membrane biogenesis; lipopolysaccharide biosynthesis. This is dTDP-rhamnosyl transferase RfbG (rfbG) from Shigella flexneri.